The primary structure comprises 527 residues: Probable glucomannan 4-beta-mannosyltransferase 9 (527 aa).

A helical transmembrane segment spans residues 37–59 (AMSVMLFVEKVYMSVVLVGVHLF). D131 is a catalytic residue. Substrate is bound by residues D190 and D192. The active site involves D284. 4 helical membrane-spanning segments follow: residues 363–383 (IIGH…TVLI), 399–419 (IVTI…IFWV), 478–498 (ALEL…IAYG), and 505–525 (FLFL…GTIV).

The protein belongs to the glycosyltransferase 2 family. Plant cellulose synthase-like A subfamily.

It is found in the golgi apparatus membrane. It catalyses the reaction GDP-mannose + (glucomannan)n = GDP + (glucomannan)n+1.. In terms of biological role, probable mannan synthase which consists of a 4-beta-mannosyltransferase activity on mannan using GDP-mannose. The beta-1,4-mannan product is the backbone for galactomannan synthesis by galactomannan galactosyltransferase. Galactomannan is a noncellulosic polysaccharides of plant cell wall. This Oryza sativa subsp. japonica (Rice) protein is Probable glucomannan 4-beta-mannosyltransferase 9.